Consider the following 183-residue polypeptide: Large ribosomal subunit protein uL6 (183 aa).

Belongs to the universal ribosomal protein uL6 family. As to quaternary structure, part of the 50S ribosomal subunit.

Functionally, this protein binds to the 23S rRNA, and is important in its secondary structure. It is located near the subunit interface in the base of the L7/L12 stalk, and near the tRNA binding site of the peptidyltransferase center. The chain is Large ribosomal subunit protein uL6 from Chlamydia pneumoniae (Chlamydophila pneumoniae).